Consider the following 359-residue polypeptide: Palmitoyltransferase ERF2 (359 aa).

The segment at 1 to 21 (MALVSRRSTRSESTSITKEEH) is disordered. The Cytoplasmic segment spans residues 1–75 (MALVSRRSTR…RFRTVKGAKP (75 aa)). Residues 76-96 (LWLGVLLAIVCPMVLFSIFEA) traverse the membrane as a helical segment. Over 97–104 (HKLWHTQN) the chain is Lumenal. The helical transmembrane segment at 105-125 (GYKVLVIFFYYFWVITLASFI) threads the bilayer. The Cytoplasmic segment spans residues 126–217 (RTATSDPGVL…NCIGKRNYRF (92 aa)). The 51-residue stretch at 173 to 223 (KYCPSCRIWRPPRSSHCSTCNVCVMVHDHHCIWVNNCIGKRNYRFFLIFLL) folds into the DHHC domain. The active-site S-palmitoyl cysteine intermediate is Cys203. The chain crosses the membrane as a helical span at residues 218–238 (FLIFLLGAILSSVILLTNCAI). Residues 239–250 (HIARESGGPRDC) lie on the Lumenal side of the membrane. Residues 251-271 (PVAILLLCYAGLTLWYPAILF) form a helical membrane-spanning segment. The Cytoplasmic segment spans residues 272–359 (TYHIFMAGNQ…AHSFEKIQKI (88 aa)).

It belongs to the DHHC palmitoyltransferase family. ERF2/ZDHHC9 subfamily. Interacts with SHR5. Post-translationally, autopalmitoylated.

The protein resides in the endoplasmic reticulum membrane. The enzyme catalyses L-cysteinyl-[protein] + hexadecanoyl-CoA = S-hexadecanoyl-L-cysteinyl-[protein] + CoA. Its function is as follows. The ERF2-SHR5 complex is a palmitoyltransferase specific for Ras proteins. Palmitoylates RAS2, which is required for its proper plasma membrane localization. This chain is Palmitoyltransferase ERF2 (ERF2), found in Saccharomyces cerevisiae (strain ATCC 204508 / S288c) (Baker's yeast).